We begin with the raw amino-acid sequence, 110 residues long: Large ribosomal subunit protein uL22 (110 aa).

Belongs to the universal ribosomal protein uL22 family. As to quaternary structure, part of the 50S ribosomal subunit.

In terms of biological role, this protein binds specifically to 23S rRNA; its binding is stimulated by other ribosomal proteins, e.g. L4, L17, and L20. It is important during the early stages of 50S assembly. It makes multiple contacts with different domains of the 23S rRNA in the assembled 50S subunit and ribosome. The globular domain of the protein is located near the polypeptide exit tunnel on the outside of the subunit, while an extended beta-hairpin is found that lines the wall of the exit tunnel in the center of the 70S ribosome. In Haemophilus influenzae (strain 86-028NP), this protein is Large ribosomal subunit protein uL22.